The chain runs to 310 residues: MDLVNHLEDRLLFAVPKKGRLYESCVNVLKGSDIKFRRNPRLDIALVQNLPIALVFLPAADIPRFVGTGRVHLGITGQDQIAEARLRIGDKLKIEELVDLQFGGCKLQVQVPESGDITSVDQLVGRRIVTSFEYLVAEYFDKVEKKAKSEGKVDSGIKTEISFVSGSVEASCALGIADAVVDLVESGETMRASGLKPIETVMSTSAVLVRSSNCSSELEPLLQTIITRIRGYIIAQQYVLVNYNVNREHLPVVLKITPGKRAPTITTLDEPGWVAVSSMVVKKEVAQVMDKLSQNHAHDILVLSIDNSRP.

Belongs to the ATP phosphoribosyltransferase family.

It is found in the cytoplasm. It carries out the reaction 1-(5-phospho-beta-D-ribosyl)-ATP + diphosphate = 5-phospho-alpha-D-ribose 1-diphosphate + ATP. The protein operates within amino-acid biosynthesis; L-histidine biosynthesis; L-histidine from 5-phospho-alpha-D-ribose 1-diphosphate: step 1/9. Functionally, catalyzes the condensation of ATP and 5-phosphoribose 1-diphosphate to form N'-(5'-phosphoribosyl)-ATP (PR-ATP). Has a crucial role in the pathway because the rate of histidine biosynthesis seems to be controlled primarily by regulation of HisG enzymatic activity. In Schizosaccharomyces pombe (strain 972 / ATCC 24843) (Fission yeast), this protein is ATP phosphoribosyltransferase (his1).